A 164-amino-acid chain; its full sequence is UPF0304 protein MS2240 (164 aa).

Belongs to the UPF0304 family.

In Mannheimia succiniciproducens (strain KCTC 0769BP / MBEL55E), this protein is UPF0304 protein MS2240.